A 361-amino-acid polypeptide reads, in one-letter code: Protein-L-isoaspartate O-methyltransferase domain-containing protein 2 (361 aa).

A lipid anchor (N-myristoyl glycine) is attached at Gly-2. Residue Ser-64 is part of the active site. AdoMet binding motif stretches follow at residues 85-94, 160-164, and 181-191; these read LNLGSGTGYL, YDRVY, and LKVGGILVMPL. Residues 240-250 are BC-box; it reads VRSLQDLARIA. Residues 303–312 show a composition bias toward polar residues; it reads SNPSDDNSSG. The tract at residues 303 to 335 is disordered; the sequence is SNPSDDNSSGDLEEERREEEATTPPDAKPEPPV. The interval 345 to 348 is CUL-box; it reads LPLP.

Belongs to the methyltransferase superfamily. L-isoaspartyl/D-aspartyl protein methyltransferase family.

It localises to the cytoplasm. Its function is as follows. May act as a substrate recognition component of an ECS (Elongin BC-CUL5-SOCS-box protein) E3 ubiquitin ligase complex which mediates the ubiquitination and subsequent proteasomal degradation of target proteins. May bind to the methyltransferase cofactor S-adenosylmethionine (AdoMet) via the N-terminal AdoMet binding motif, but probably does not display methyltransferase activity. This is Protein-L-isoaspartate O-methyltransferase domain-containing protein 2 (PCMTD2) from Bos taurus (Bovine).